A 361-amino-acid polypeptide reads, in one-letter code: Ankyrin repeat domain-containing protein 16 (361 aa).

9 ANK repeats span residues 36–66 (AGDTLLHCAARHGRQDILAYLVEAWSMDIEA), 70–99 (DYKRPLHEAASMGHRDCVRYLLGRGAVVDS), 103–132 (ADWTPLMMACTRKNLDVIQDLVEHGANPLL), 136–165 (DGWNSFHIASREGHPVILRYLLTVCPDAWK), 170–200 (IRRTPLHTAAMHGCLEAVQVLLERCHYEPDC), 204–233 (CGVTPFMDAIQCGHVSIAKLLLEQHKACSS), 238–268 (MGAQALHRAAVTGQDEAIRFLVCGLGIDVDV), 273–302 (SQLTALHYAAKEGQTNTVQTLLSLGADINS), and 306–335 (RNRSVLHLACAGQHVACTRLLLQSGLKDSE).

As to quaternary structure, interacts with AARS; the interaction is direct. Widely expressed in brain (at protein level).

The protein localises to the cytoplasm. It is found in the nucleus. Its function is as follows. Required to prevent the misactivation of serine (Ser) with tRNA(Ala) by promoting the hydrolysis of Ser-mischarged tRNA(Ala), thereby playing a role in translational fidelity. Binds directly to the catalytic domain of AARS/AlaRS and captures Ser that is misactivated by AARS/AlaRS, preventing the charging of Ser adenylates to tRNA(Ala) and precluding Ser misincorporation in nascent peptides. This Mus musculus (Mouse) protein is Ankyrin repeat domain-containing protein 16.